The following is a 186-amino-acid chain: Inner membrane-spanning protein YciB (186 aa).

Transmembrane regions (helical) follow at residues 10-30, 47-67, 76-96, 121-141, and 149-169; these read IILFFAAFKVWGIYVATAVAI, VEPLQWLSLGVIVLFGGATLL, WKPTVLYWLMGGTLLVGQLMF, WGWTGFFATMGVLNLWVAYHF, and FKLFGGIGLMFAFVIAQALYL.

It belongs to the YciB family.

The protein localises to the cell inner membrane. Functionally, plays a role in cell envelope biogenesis, maintenance of cell envelope integrity and membrane homeostasis. The sequence is that of Inner membrane-spanning protein YciB from Acidovorax ebreus (strain TPSY) (Diaphorobacter sp. (strain TPSY)).